A 92-amino-acid polypeptide reads, in one-letter code: Small ribosomal subunit protein uS19 (92 aa).

Belongs to the universal ribosomal protein uS19 family.

In terms of biological role, protein S19 forms a complex with S13 that binds strongly to the 16S ribosomal RNA. The protein is Small ribosomal subunit protein uS19 of Enterococcus faecalis (strain ATCC 700802 / V583).